The primary structure comprises 222 residues: Peroxiredoxin (222 aa).

Residues 7 to 163 (PRLGEPAPAF…VIRLVDALQT (157 aa)) form the Thioredoxin domain. Cys49 acts as the Cysteine sulfenic acid (-SOH) intermediate in catalysis. Arg126 contributes to the substrate binding site. Cysteines 212 and 218 form a disulfide.

The protein belongs to the peroxiredoxin family. Prx6 subfamily. Homodecamer. Pentamer of dimers that assemble into a ring structure.

It is found in the cytoplasm. The enzyme catalyses a hydroperoxide + [thioredoxin]-dithiol = an alcohol + [thioredoxin]-disulfide + H2O. In terms of biological role, thiol-specific peroxidase that catalyzes the reduction of hydrogen peroxide and organic hydroperoxides to water and alcohols, respectively. Plays a role in cell protection against oxidative stress by detoxifying peroxides. This chain is Peroxiredoxin, found in Aquifex aeolicus (strain VF5).